A 492-amino-acid chain; its full sequence is Heat shock factor protein 4 (492 aa).

Residues 17 to 121 (VPAFLGKLWA…QLLERVRRKV (105 aa)) mediate DNA binding. Positions 129–203 (GRWRPEDLGR…GPLQAGPSNA (75 aa)) are hydrophobic repeat HR-A/B. The segment at 245-322 (LPETNLGLSP…ECDFCVTAPP (78 aa)) is interactions with DUSP26, MAPK1 and MAPK2. Residues 246–285 (PETNLGLSPHRARGPIISDIPEDSPSPEGTRLSPSSDGRR) are disordered. A Glycyl lysine isopeptide (Lys-Gly) (interchain with G-Cter in SUMO) cross-link involves residue Lys293. Ser298 carries the phosphoserine modification. The disordered stretch occupies residues 337 to 400 (GSFSPEGPRN…PAGPLDVLGP (64 aa)). Residues 364 to 389 (LGLESGDRSPESLLPPMLLQPPQESV) form a hydrophobic repeat HR-C region. Residues 374–388 (ESLLPPMLLQPPQES) are compositionally biased toward low complexity.

The protein belongs to the HSF family. Homotrimer. Exhibits constitutive DNA binding and forms trimers even in the absence of stress. Interacts with ALKBH4, DUSP26, MAPK1, MAPK2, MAPK8 and MAP kinase p38. In terms of processing, phosphorylated mainly on serine residues. Phosphorylation on Ser-298 promotes sumoylation on Lys-293. Post-translationally, isoform HSF4B is constitutively sumoylated. Sumoylation represses the transcriptional activity and is promoted by phosphorylation on Ser-298. HSFA is not sumoylated. As to expression, expressed in heart, skeletal muscle, eye and brain, and at much lower levels in some other tissues.

The protein localises to the nucleus. Its function is as follows. Heat-shock transcription factor that specifically binds heat shock promoter elements (HSE). Required for denucleation and organelle rupture and degradation that occur during eye lens terminal differentiation, when fiber cells that compose the lens degrade all membrane-bound organelles in order to provide lens with transparency to allow the passage of light. In this process, may regulate denucleation of lens fiber cells in part by activating DNASE2B transcription. May be involved in DNA repair through the transcriptional regulation of RAD51. May up-regulate p53/TP53 protein in eye lens fiber cells, possibly through protein stabilization. In the eye lens, controls the expression of alpha-crystallin B chain/CRYAB and consequently may be involved in the regulation of lysosomal acidification. Functionally, transcriptional repressor. In terms of biological role, transcriptional activator. This is Heat shock factor protein 4 (HSF4) from Homo sapiens (Human).